The chain runs to 569 residues: Urease subunit alpha (569 aa).

Residues 132 to 569 form the Urease domain; sequence GGVDTHIHFI…VPLGQRYFLF (438 aa). Positions 137, 139, and 220 each coordinate Ni(2+). Residue lysine 220 is modified to N6-carboxylysine. Residue histidine 222 participates in substrate binding. 2 residues coordinate Ni(2+): histidine 249 and histidine 275. Histidine 323 serves as the catalytic Proton donor. Aspartate 363 contacts Ni(2+).

This sequence belongs to the metallo-dependent hydrolases superfamily. Urease alpha subunit family. Heterotrimer of UreA (gamma), UreB (beta) and UreC (alpha) subunits. Three heterotrimers associate to form the active enzyme. It depends on Ni cation as a cofactor. Post-translationally, carboxylation allows a single lysine to coordinate two nickel ions.

It localises to the cytoplasm. It carries out the reaction urea + 2 H2O + H(+) = hydrogencarbonate + 2 NH4(+). The protein operates within nitrogen metabolism; urea degradation; CO(2) and NH(3) from urea (urease route): step 1/1. This chain is Urease subunit alpha, found in Bacillus subtilis (strain 168).